The primary structure comprises 365 residues: MASSSTAFYLKDAGFHIRNVPKEWNDWNLFHIFQVFGRVGYCRVAGQSNDMQLGFVNMLSAADAEEVRKNLHDGNLIGDNYSLKVSDHKNIGGALLPMASISVQKLLSSPPAKSGPVHLSSSWLPLNKDIEVEVVDYLPSSSAAKDVFALTILRINDAQSNEKYNAMHEKMNSYAQLVAFDSELQIGYDGVFRESPRSIKRVRRISATKLYLVDFGKIINYEKSKCFQIPKVFQTIPTRVSFCGLDGLTWSEQAIPSFDNIREVVQKWGAMENATLHAVTCGFAGAINMINLFCGNSVLAERLQRKGICEYLPRHQQPRFAYSRDSLLKHTNAGVTAHISNDADVVKDLLKKIDGVKSMLRELDL.

In terms of domain architecture, RRM spans 13–90 (AGFHIRNVPK…YSLKVSDHKN (78 aa)).

Its function is as follows. Required maternally for early embryonic cell divisions. May have a role in DNA replication. The protein is Embryonic developmental protein tofu-6 of Caenorhabditis briggsae.